A 130-amino-acid polypeptide reads, in one-letter code: Small ribosomal subunit protein uS11 (130 aa).

The protein belongs to the universal ribosomal protein uS11 family. As to quaternary structure, part of the 30S ribosomal subunit. Interacts with proteins S7 and S18. Binds to IF-3.

Its function is as follows. Located on the platform of the 30S subunit, it bridges several disparate RNA helices of the 16S rRNA. Forms part of the Shine-Dalgarno cleft in the 70S ribosome. The chain is Small ribosomal subunit protein uS11 from Aliarcobacter butzleri (strain RM4018) (Arcobacter butzleri).